A 370-amino-acid polypeptide reads, in one-letter code: Histidinol-phosphate aminotransferase 1 (370 aa).

Lysine 222 is modified (N6-(pyridoxal phosphate)lysine).

Belongs to the class-II pyridoxal-phosphate-dependent aminotransferase family. Histidinol-phosphate aminotransferase subfamily. Homodimer. It depends on pyridoxal 5'-phosphate as a cofactor.

The enzyme catalyses L-histidinol phosphate + 2-oxoglutarate = 3-(imidazol-4-yl)-2-oxopropyl phosphate + L-glutamate. It participates in amino-acid biosynthesis; L-histidine biosynthesis; L-histidine from 5-phospho-alpha-D-ribose 1-diphosphate: step 7/9. The sequence is that of Histidinol-phosphate aminotransferase 1 from Bacillus cereus (strain ATCC 10987 / NRS 248).